The chain runs to 496 residues: Solute carrier family 2, facilitated glucose transporter member 11 (496 aa).

Residues 1–11 (MRALRRLIQGR) are Cytoplasmic-facing. A helical membrane pass occupies residues 12–32 (ILLLTICAAGIGGTFQFGYNL). Over 33–61 (SIINAPTLHIQEFTNETWQARTGEPLPDH) the chain is Extracellular. N47 carries N-linked (GlcNAc...) asparagine glycosylation. The helical transmembrane segment at 62-82 (LVLLMWSLIVSLYPLGGLFGA) threads the bilayer. Topologically, residues 83 to 97 (LLAGPLAITLGRKKS) are cytoplasmic. A helical transmembrane segment spans residues 98–118 (LLVNNIFVVSAAILFGFSRKA). Residues 119 to 128 (GSFEMIMLGR) lie on the Extracellular side of the membrane. A helical membrane pass occupies residues 129–149 (LLVGVNAGVSMNIQPMYLGES). The Cytoplasmic segment spans residues 150–157 (APKELRGA). A helical membrane pass occupies residues 158–178 (VAMSSAIFTALGIVMGQVVGL). Residues 179–187 (RELLGGPQA) are Extracellular-facing. Residues 188-208 (WPLLLASCLVPGALQLASLPL) traverse the membrane as a helical segment. The Cytoplasmic portion of the chain corresponds to 209-273 (LPESPRYLLI…LFQHRALRRQ (65 aa)). The chain crosses the membrane as a helical span at residues 274–294 (VTSLVVLGSAMELCGNDSVYA). The Extracellular segment spans residues 295-311 (YASSVFRKAGVPEAKIQ). The helical transmembrane segment at 312 to 332 (YAIIGTGSCELLTAVVSCVVI) threads the bilayer. The Cytoplasmic portion of the chain corresponds to 333 to 338 (ERVGRR). The helical transmembrane segment at 339 to 359 (VLLIGGYSLMTCWGSIFTVAL) threads the bilayer. The Extracellular segment spans residues 360 to 364 (CLQSS). Residues 365-385 (FPWTLYLAMACIFAFILSFGI) traverse the membrane as a helical segment. The Cytoplasmic portion of the chain corresponds to 386–408 (GPAGVTGILATELFDQMARPAAC). Residues 409-429 (MVCGALMWIMLILVGLGFPFI) form a helical membrane-spanning segment. Residues 430 to 435 (MEALSH) are Extracellular-facing. Residues 436–456 (FLYVPFLGVCVCGAIYTGLFL) traverse the membrane as a helical segment. The Cytoplasmic segment spans residues 457–496 (PETKGKTFQEISKELHRLNFPRRAQGPTWRSLEVIQSTEL).

It belongs to the major facilitator superfamily. Sugar transporter (TC 2.A.1.1) family. Glucose transporter subfamily. In terms of tissue distribution, expressed in heart and skeletal muscle.

It localises to the cell membrane. The enzyme catalyses D-glucose(out) = D-glucose(in). Its function is as follows. Facilitative glucose transporter. The polypeptide is Solute carrier family 2, facilitated glucose transporter member 11 (Homo sapiens (Human)).